The following is a 148-amino-acid chain: Nucleoside diphosphate kinase 1 (148 aa).

ATP is bound by residues Lys-9, Phe-57, Arg-85, Thr-91, Arg-102, and Asn-112. The active-site Pros-phosphohistidine intermediate is His-115.

This sequence belongs to the NDK family. Mg(2+) serves as cofactor. In terms of processing, the N-terminus is blocked.

It catalyses the reaction a 2'-deoxyribonucleoside 5'-diphosphate + ATP = a 2'-deoxyribonucleoside 5'-triphosphate + ADP. It carries out the reaction a ribonucleoside 5'-diphosphate + ATP = a ribonucleoside 5'-triphosphate + ADP. In terms of biological role, major role in the synthesis of nucleoside triphosphates other than ATP. The ATP gamma phosphate is transferred to the NDP beta phosphate via a ping-pong mechanism, using a phosphorylated active-site intermediate. In Spinacia oleracea (Spinach), this protein is Nucleoside diphosphate kinase 1 (NDPK1).